A 138-amino-acid chain; its full sequence is Small ribosomal subunit protein uS11 (138 aa).

Over residues 1-12 the composition is skewed to low complexity; it reads MPPKKANAAGPK. Positions 1–23 are disordered; sequence MPPKKANAAGPKKGQKTRKREKK. Over residues 13–22 the composition is skewed to basic residues; it reads KGQKTRKREK.

It belongs to the universal ribosomal protein uS11 family. As to quaternary structure, part of the 30S ribosomal subunit. Interacts with proteins S7 and S18. Binds to IF-3.

Its function is as follows. Located on the platform of the 30S subunit, it bridges several disparate RNA helices of the 16S rRNA. Forms part of the Shine-Dalgarno cleft in the 70S ribosome. This chain is Small ribosomal subunit protein uS11, found in Mycobacterium leprae (strain Br4923).